The following is a 212-amino-acid chain: ATP-dependent dethiobiotin synthetase BioD (212 aa).

Position 13-18 (13-18 (GVGKTV)) interacts with ATP. Threonine 17 is a binding site for Mg(2+). Lysine 33 is an active-site residue. Mg(2+) is bound at residue glutamate 100. Residues 100–103 (EGAG) and 184–186 (PHL) each bind ATP.

It belongs to the dethiobiotin synthetase family. Homodimer. Requires Mg(2+) as cofactor.

It is found in the cytoplasm. The catalysed reaction is (7R,8S)-7,8-diammoniononanoate + CO2 + ATP = (4R,5S)-dethiobiotin + ADP + phosphate + 3 H(+). The protein operates within cofactor biosynthesis; biotin biosynthesis; biotin from 7,8-diaminononanoate: step 1/2. Functionally, catalyzes a mechanistically unusual reaction, the ATP-dependent insertion of CO2 between the N7 and N8 nitrogen atoms of 7,8-diaminopelargonic acid (DAPA, also called 7,8-diammoniononanoate) to form a ureido ring. The chain is ATP-dependent dethiobiotin synthetase BioD from Rhodopseudomonas palustris (strain BisB5).